We begin with the raw amino-acid sequence, 660 residues long: Bifunctional polymyxin resistance protein ArnA (660 aa).

Residues 1-304 are formyltransferase ArnAFT; sequence MKAVVFAYHN…EMYLVEGMRF (304 aa). The active-site Proton donor; for formyltransferase activity is the His104. (6R)-10-formyltetrahydrofolate is bound by residues Arg114 and 136–140; that span reads TVKPD. Residues 316–660 are dehydrogenase ArnADH; it reads RRQKVLIMGA…FLKTAVEETK (345 aa). Residues Asp349 and 370 to 371 contribute to the NAD(+) site; that span reads DI. UDP-alpha-D-glucuronate contacts are provided by residues Ala395, Tyr400, and 434-435; that span reads TS. Catalysis depends on Glu436, which acts as the Proton acceptor; for decarboxylase activity. UDP-alpha-D-glucuronate contacts are provided by residues Arg462, Asn494, 528-537, and Tyr615; that span reads KLIDGGEQKR. The Proton donor; for decarboxylase activity role is filled by Arg621.

In the N-terminal section; belongs to the Fmt family. UDP-L-Ara4N formyltransferase subfamily. The protein in the C-terminal section; belongs to the NAD(P)-dependent epimerase/dehydratase family. UDP-glucuronic acid decarboxylase subfamily. As to quaternary structure, homohexamer, formed by a dimer of trimers.

It catalyses the reaction UDP-alpha-D-glucuronate + NAD(+) = UDP-beta-L-threo-pentopyranos-4-ulose + CO2 + NADH. The enzyme catalyses UDP-4-amino-4-deoxy-beta-L-arabinose + (6R)-10-formyltetrahydrofolate = UDP-4-deoxy-4-formamido-beta-L-arabinose + (6S)-5,6,7,8-tetrahydrofolate + H(+). The protein operates within nucleotide-sugar biosynthesis; UDP-4-deoxy-4-formamido-beta-L-arabinose biosynthesis; UDP-4-deoxy-4-formamido-beta-L-arabinose from UDP-alpha-D-glucuronate: step 1/3. It participates in nucleotide-sugar biosynthesis; UDP-4-deoxy-4-formamido-beta-L-arabinose biosynthesis; UDP-4-deoxy-4-formamido-beta-L-arabinose from UDP-alpha-D-glucuronate: step 3/3. It functions in the pathway bacterial outer membrane biogenesis; lipopolysaccharide biosynthesis. Functionally, bifunctional enzyme that catalyzes the oxidative decarboxylation of UDP-glucuronic acid (UDP-GlcUA) to UDP-4-keto-arabinose (UDP-Ara4O) and the addition of a formyl group to UDP-4-amino-4-deoxy-L-arabinose (UDP-L-Ara4N) to form UDP-L-4-formamido-arabinose (UDP-L-Ara4FN). The modified arabinose is attached to lipid A and is required for resistance to polymyxin and cationic antimicrobial peptides. The polypeptide is Bifunctional polymyxin resistance protein ArnA (Shewanella sediminis (strain HAW-EB3)).